Reading from the N-terminus, the 100-residue chain is Urease subunit gamma (100 aa).

It belongs to the urease gamma subunit family. Heterotrimer of UreA (gamma), UreB (beta) and UreC (alpha) subunits. Three heterotrimers associate to form the active enzyme.

The protein localises to the cytoplasm. The catalysed reaction is urea + 2 H2O + H(+) = hydrogencarbonate + 2 NH4(+). It functions in the pathway nitrogen metabolism; urea degradation; CO(2) and NH(3) from urea (urease route): step 1/1. This Dinoroseobacter shibae (strain DSM 16493 / NCIMB 14021 / DFL 12) protein is Urease subunit gamma.